Here is a 500-residue protein sequence, read N- to C-terminus: NAD(P)H-quinone oxidoreductase chain 4, chloroplastic (500 aa).

The next 15 helical transmembrane spans lie at 4-24, 35-55, 80-100, 113-130, 134-154, 167-187, 208-228, 242-262, 274-294, 305-325, 330-350, 364-384, 386-406, 416-436, and 462-482; these read FYWL…IALL, YTIC…CYHF, LGID…TTLA, LFHF…GSFS, LLLF…LLSM, FILY…GMGL, ALEI…SPII, HYST…YGLV, SIFS…AALT, IAYS…SITD, GAIL…FLAG, MGGI…FSMA, LALP…GIIT, ILIT…SLSM, and IFIF…PDFV.

Belongs to the complex I subunit 4 family.

Its subcellular location is the plastid. It localises to the chloroplast thylakoid membrane. The catalysed reaction is a plastoquinone + NADH + (n+1) H(+)(in) = a plastoquinol + NAD(+) + n H(+)(out). It carries out the reaction a plastoquinone + NADPH + (n+1) H(+)(in) = a plastoquinol + NADP(+) + n H(+)(out). This Nymphaea alba (White water-lily) protein is NAD(P)H-quinone oxidoreductase chain 4, chloroplastic.